Here is a 138-residue protein sequence, read N- to C-terminus: Large ribosomal subunit protein uL16 (138 aa).

It belongs to the universal ribosomal protein uL16 family. Part of the 50S ribosomal subunit.

In terms of biological role, binds 23S rRNA and is also seen to make contacts with the A and possibly P site tRNAs. This Acidiphilium cryptum (strain JF-5) protein is Large ribosomal subunit protein uL16.